Consider the following 277-residue polypeptide: Putative protein-disulfide oxidoreductase RC0029 (277 aa).

The first 22 residues, methionine 1–alanine 22, serve as a signal peptide directing secretion. The disordered stretch occupies residues glutamate 34–glutamine 80. Positions asparagine 39 to glutamine 80 are enriched in polar residues. Positions alanine 76 to glutamate 265 constitute a Thioredoxin domain. A disulfide bridge links cysteine 118 with cysteine 121.

This sequence belongs to the thioredoxin family. DsbA subfamily.

It localises to the periplasm. Functionally, may be required for disulfide bond formation in some proteins. The polypeptide is Putative protein-disulfide oxidoreductase RC0029 (Rickettsia conorii (strain ATCC VR-613 / Malish 7)).